The sequence spans 368 residues: MSDNSQKKVIVGMSGGVDSSVSAYLLQQQGYHVEGLFMKNWEEDDDTEYCSAATDLADAQAVCDKLGIELHTVNFAAEYWDNVFELFLEEYKAGRTPNPDILCNKEIKFKAFLEFAAEDLGADYIATGHYVRRHDVDGKSRLLRGMDGNKDQSYFLYTLSHEQIAQSLFPVGELEKPQVRKIAEELELATAKKKDSTGICFIGERKFTDFLARYLPAQPGPILSVDDNKPMGQHQGLMYHTLGQRKGLGIGGVKDGGEDPWYVVDKDVANNILYVAQGHEHPRLMSYGLIAQQLHWVDRQPLTAELRCTVKTRYRQADISCTVTPLGDDRITVRFDEPFAAVTPGQSAVFYLDDVCLGGGIIEERLQE.

ATP contacts are provided by residues 12 to 19 (GMSGGVDS) and methionine 38. An interaction with target base in tRNA region spans residues 98–100 (NPD). Cysteine 103 acts as the Nucleophile in catalysis. Residues cysteine 103 and cysteine 200 are joined by a disulfide bond. Glycine 128 contributes to the ATP binding site. The tract at residues 150–152 (KDQ) is interaction with tRNA. Cysteine 200 (cysteine persulfide intermediate) is an active-site residue. An interaction with tRNA region spans residues 313-314 (RY).

It belongs to the MnmA/TRMU family. In terms of assembly, interacts with TusE.

It localises to the cytoplasm. It catalyses the reaction S-sulfanyl-L-cysteinyl-[protein] + uridine(34) in tRNA + AH2 + ATP = 2-thiouridine(34) in tRNA + L-cysteinyl-[protein] + A + AMP + diphosphate + H(+). Its function is as follows. Catalyzes the 2-thiolation of uridine at the wobble position (U34) of tRNA(Lys), tRNA(Glu) and tRNA(Gln), leading to the formation of s(2)U34, the first step of tRNA-mnm(5)s(2)U34 synthesis. Sulfur is provided by IscS, via a sulfur-relay system. Binds ATP and its substrate tRNAs. The sequence is that of tRNA-specific 2-thiouridylase MnmA from Pectobacterium atrosepticum (strain SCRI 1043 / ATCC BAA-672) (Erwinia carotovora subsp. atroseptica).